We begin with the raw amino-acid sequence, 356 residues long: MNFTEPSPLAQSTVVGFLPELESLTPVPSNETSCENWREVHHLVFHAANVCFAVGLLIPTTLHLHMILLRVMLSIGCTLYVVWATLYRCALDMMIWNSVFLGINILHLSYLLYKKRPVKIEKDLGGVYHRLFEPLRVPPDLFRRLTGQFCVIQTLKRGQVYATEDKTSVDDRLSILLKGRMKVSYRGHFLHNIYPCAFIDSPEFRSTQMHKGEKFQVTIVADDNCRFLCWSRERLTYFLESEPFLYEIFRYLIGKDITNKLYSLNDPTLNDKKVKKLEPQMSLSTQISMLEMRNSITSSSDIEDGLHHFLRGSSSTASLPMSSPQQRASPKMKPIEEGLEDDDEVFVPVSPAHQLP.

The Extracellular segment spans residues 1–48; that stretch reads MNFTEPSPLAQSTVVGFLPELESLTPVPSNETSCENWREVHHLVFHAA. N-linked (GlcNAc...) asparagine glycans are attached at residues N2 and N30. The helical transmembrane segment at 49–69 threads the bilayer; that stretch reads NVCFAVGLLIPTTLHLHMILL. Position 70 (R70) is a topological domain, cytoplasmic. A helical membrane pass occupies residues 71–91; the sequence is VMLSIGCTLYVVWATLYRCAL. D92 is a topological domain (extracellular). Residues 93–113 traverse the membrane as a helical segment; sequence MMIWNSVFLGINILHLSYLLY. A required for interaction with CAV3 region spans residues 93–115; it reads MMIWNSVFLGINILHLSYLLYKK. Residues 114–356 are Cytoplasmic-facing; that stretch reads KKRPVKIEKD…VPVSPAHQLP (243 aa). Residues 136–186 are required for interaction with KCNK2; sequence RVPPDLFRRLTGQFCVIQTLKRGQVYATEDKTSVDDRLSILLKGRMKVSYR. Phosphoserine occurs at positions 295 and 318. Positions 313–323 are enriched in low complexity; that stretch reads SSSTASLPMSS. The segment at 313 to 356 is disordered; the sequence is SSSTASLPMSSPQQRASPKMKPIEEGLEDDDEVFVPVSPAHQLP.

The protein belongs to the popeye family. As to quaternary structure, homodimer. Homodimerization requires the C-terminus cytoplasmic region. Interacts (via the C-terminus cytoplasmic tail) with TJP1. Interacts (via the C-terminus cytoplasmic tail) with ARHGEF25/GEFT (via the DH domain). Interacts (via the C-terminus cytoplasmic tail) with VAMP3. Interacts with KCNK2; the interaction enhances KCNK2 surface expression and is inhibited by cAMP. Interacts with CAV3. Strongly expressed in heart and skeletal muscle. Weakly expressed in brain, spleen, liver, kidney and lung.

Its subcellular location is the lateral cell membrane. It localises to the cell junction. It is found in the tight junction. The protein resides in the membrane. The protein localises to the cell membrane. Its subcellular location is the sarcolemma. It localises to the caveola. Its function is as follows. Cell adhesion molecule involved in the establishment and/or maintenance of cell integrity. Involved in the formation and regulation of the tight junction (TJ) paracellular permeability barrier in epithelial cells. Plays a role in VAMP3-mediated vesicular transport and recycling of different receptor molecules through its interaction with VAMP3. Plays a role in the regulation of cell shape and movement by modulating the Rho-family GTPase activity through its interaction with ARHGEF25/GEFT. Induces primordial adhesive contact and aggregation of epithelial cells in a Ca(2+)-independent manner. Important for skeletal muscle and heart development. Also involved in striated muscle regeneration and repair and in the regulation of cell spreading. Important for the maintenance of cardiac function. Plays a regulatory function in heart rate dynamics mediated, at least in part, through cAMP-binding and, probably, by increasing cell surface expression of the potassium channel KCNK2 and enhancing current density. Is a caveolae-associated protein important for the preservation of caveolae structural and functional integrity as well as for heart protection against ischemia injury. In Rattus norvegicus (Rat), this protein is Popeye domain-containing protein 1 (Popdc1).